The sequence spans 246 residues: MLDQVCQLARNAGDAIMQVYDGAKPMDVVSKADNSPVTAADIAAHTVIMDGLRTLTPDIPVLSEEDPPGWEVRQHWQRYWLVDPLDGTKEFIKRNGEFTVNIALIDHGKPILGVVYAPVMNVMYSAAEGKAWKEECGVRKQIQVRDARPPLVVISRSHADAELKEYLQQLGEHQTTSIGSSLKFCLVAEGQAQLYPRFGPTNIWDTAAGHAVAAAAGAHVHDWQGKPLDYTPRESFLNPGFRVSIY.

Residues E64, D83, L85, D86, and D205 each contribute to the Mg(2+) site. E64 is a substrate binding site. Substrate-binding positions include 85–88 and D205; that span reads LDGT.

This sequence belongs to the inositol monophosphatase superfamily. CysQ family. The cofactor is Mg(2+).

The protein resides in the cell inner membrane. It catalyses the reaction adenosine 3',5'-bisphosphate + H2O = AMP + phosphate. In terms of biological role, converts adenosine-3',5'-bisphosphate (PAP) to AMP. This chain is 3'(2'),5'-bisphosphate nucleotidase CysQ, found in Escherichia coli O157:H7.